The following is a 225-amino-acid chain: Ribose-5-phosphate isomerase A (225 aa).

Residues 27–30, 80–83, and 93–96 contribute to the substrate site; these read SGST, DGAD, and KGGG. The active-site Proton acceptor is the glutamate 102. Lysine 120 provides a ligand contact to substrate.

Belongs to the ribose 5-phosphate isomerase family. In terms of assembly, homodimer.

The enzyme catalyses aldehydo-D-ribose 5-phosphate = D-ribulose 5-phosphate. It participates in carbohydrate degradation; pentose phosphate pathway; D-ribose 5-phosphate from D-ribulose 5-phosphate (non-oxidative stage): step 1/1. Functionally, catalyzes the reversible conversion of ribose-5-phosphate to ribulose 5-phosphate. In Korarchaeum cryptofilum (strain OPF8), this protein is Ribose-5-phosphate isomerase A.